A 396-amino-acid chain; its full sequence is Phosphoglycerate kinase (396 aa).

Substrate contacts are provided by residues 21–23 (DFN), Arg-36, 59–62 (HLGR), Arg-118, and Arg-151. ATP contacts are provided by residues Lys-201, Gly-292, Glu-323, and 349–352 (GGDS).

It belongs to the phosphoglycerate kinase family. Monomer.

The protein resides in the cytoplasm. It catalyses the reaction (2R)-3-phosphoglycerate + ATP = (2R)-3-phospho-glyceroyl phosphate + ADP. Its pathway is carbohydrate degradation; glycolysis; pyruvate from D-glyceraldehyde 3-phosphate: step 2/5. This Leptospira borgpetersenii serovar Hardjo-bovis (strain L550) protein is Phosphoglycerate kinase.